The primary structure comprises 447 residues: Transcription factor azf1 (447 aa).

2 disordered regions span residues 125 to 155 (HNGASQQPPGAQSSSNEEGAQGKSSSSNEVE) and 174 to 199 (QSPGVQSLPPLQQLTHGGSNGYPQSY). Over residues 127-139 (GASQQPPGAQSSS) the composition is skewed to low complexity. Residues 140 to 155 (NEEGAQGKSSSSNEVE) show a composition bias toward polar residues. C2H2-type zinc fingers lie at residues 225–249 (YACTLPQCGKSFAQKTHLDIHMRAH), 255–279 (FVCKEPSCGQRFSQLGNLKTHQRRH), 285–307 (FSCDICQKRFAQRGNVRAHKITH), and 313–338 (FTCLLDDCGKQFTQLGNLKSHQNKFH). Residues 377–447 (NKGIKGRGKD…EPYFIERQAH (71 aa)) form a disordered region. Basic and acidic residues predominate over residues 397-416 (PGSESRRRIEPLSSTDDKMR). Residues 421 to 431 (GDTSMYNGGSS) show a composition bias toward polar residues.

The protein resides in the nucleus. In terms of biological role, transcription factor that acts as a positive regulator of ochratoxin A (OTA) biosynthesis via controlling the expression of antioxidant genes and oxidative phosphorylation genes. This is Transcription factor azf1 from Aspergillus niger (strain ATCC MYA-4892 / CBS 513.88 / FGSC A1513).